We begin with the raw amino-acid sequence, 364 residues long: Phosphoserine aminotransferase (364 aa).

L-glutamate is bound at residue arginine 46. Residues 80 to 81 (AR), tryptophan 106, threonine 157, aspartate 176, and glutamine 199 contribute to the pyridoxal 5'-phosphate site. Lysine 200 bears the N6-(pyridoxal phosphate)lysine mark. 241-242 (NT) is a pyridoxal 5'-phosphate binding site.

It belongs to the class-V pyridoxal-phosphate-dependent aminotransferase family. SerC subfamily. As to quaternary structure, homodimer. It depends on pyridoxal 5'-phosphate as a cofactor.

Its subcellular location is the cytoplasm. The catalysed reaction is O-phospho-L-serine + 2-oxoglutarate = 3-phosphooxypyruvate + L-glutamate. It carries out the reaction 4-(phosphooxy)-L-threonine + 2-oxoglutarate = (R)-3-hydroxy-2-oxo-4-phosphooxybutanoate + L-glutamate. Its pathway is amino-acid biosynthesis; L-serine biosynthesis; L-serine from 3-phospho-D-glycerate: step 2/3. It functions in the pathway cofactor biosynthesis; pyridoxine 5'-phosphate biosynthesis; pyridoxine 5'-phosphate from D-erythrose 4-phosphate: step 3/5. Catalyzes the reversible conversion of 3-phosphohydroxypyruvate to phosphoserine and of 3-hydroxy-2-oxo-4-phosphonooxybutanoate to phosphohydroxythreonine. The polypeptide is Phosphoserine aminotransferase (Vibrio cholerae serotype O1 (strain ATCC 39315 / El Tor Inaba N16961)).